A 314-amino-acid chain; its full sequence is Vacuolar membrane protein VL3_4134 (314 aa).

Positions 32-60 are disordered; the sequence is KPTSSVVSETSSKSLPSLTSSAFSTSSGA. A helical membrane pass occupies residues 93–113; the sequence is VYIAVGAVIGAIFISILIWWL. Serine 148, serine 254, and serine 274 each carry phosphoserine. A disordered region spans residues 240–309; sequence EERKLNLNRP…PSMFLDDVLN (70 aa). A compositionally biased stretch (basic and acidic residues) spans 254–269; the sequence is SPERKEKKINSMEGYH.

This sequence belongs to the PRM5 family.

It localises to the vacuole membrane. This chain is Vacuolar membrane protein VL3_4134, found in Saccharomyces cerevisiae (strain Zymaflore VL3) (Baker's yeast).